The following is a 445-amino-acid chain: tRNA-2-methylthio-N(6)-dimethylallyladenosine synthase (445 aa).

The MTTase N-terminal domain occupies 3–124 (KKLYIKTYGC…LPELISKVVR (122 aa)). [4Fe-4S] cluster contacts are provided by Cys12, Cys48, Cys87, Cys162, Cys166, and Cys169. The Radical SAM core domain maps to 148–380 (YPQGTSAFIS…QQELMAQQLA (233 aa)). The region spanning 383-445 (TSCVGSTMKV…SLNSLTGEIL (63 aa)) is the TRAM domain.

Belongs to the methylthiotransferase family. MiaB subfamily. As to quaternary structure, monomer. It depends on [4Fe-4S] cluster as a cofactor.

It localises to the cytoplasm. It catalyses the reaction N(6)-dimethylallyladenosine(37) in tRNA + (sulfur carrier)-SH + AH2 + 2 S-adenosyl-L-methionine = 2-methylsulfanyl-N(6)-dimethylallyladenosine(37) in tRNA + (sulfur carrier)-H + 5'-deoxyadenosine + L-methionine + A + S-adenosyl-L-homocysteine + 2 H(+). Its function is as follows. Catalyzes the methylthiolation of N6-(dimethylallyl)adenosine (i(6)A), leading to the formation of 2-methylthio-N6-(dimethylallyl)adenosine (ms(2)i(6)A) at position 37 in tRNAs that read codons beginning with uridine. The chain is tRNA-2-methylthio-N(6)-dimethylallyladenosine synthase from Rickettsia rickettsii (strain Iowa).